The primary structure comprises 243 residues: 1-(5-phosphoribosyl)-5-[(5-phosphoribosylamino)methylideneamino] imidazole-4-carboxamide isomerase (243 aa).

Asp-8 functions as the Proton acceptor in the catalytic mechanism. Asp-130 (proton donor) is an active-site residue.

This sequence belongs to the HisA/HisF family.

Its subcellular location is the cytoplasm. It carries out the reaction 1-(5-phospho-beta-D-ribosyl)-5-[(5-phospho-beta-D-ribosylamino)methylideneamino]imidazole-4-carboxamide = 5-[(5-phospho-1-deoxy-D-ribulos-1-ylimino)methylamino]-1-(5-phospho-beta-D-ribosyl)imidazole-4-carboxamide. Its pathway is amino-acid biosynthesis; L-histidine biosynthesis; L-histidine from 5-phospho-alpha-D-ribose 1-diphosphate: step 4/9. This is 1-(5-phosphoribosyl)-5-[(5-phosphoribosylamino)methylideneamino] imidazole-4-carboxamide isomerase from Methylococcus capsulatus (strain ATCC 33009 / NCIMB 11132 / Bath).